The chain runs to 399 residues: Lipoyl synthase, mitochondrial (399 aa).

The transit peptide at 1 to 30 directs the protein to the mitochondrion; the sequence is MRAVLELTRRRARNARFARARAVVGARARA. Basic and acidic residues predominate over residues 31–41; that stretch reads ADAQELRDDSK. Residues 31–58 are disordered; it reads ADAQELRDDSKGGSSVDKATSTAAEARE. Residues Cys-131, Cys-136, Cys-142, Cys-162, Cys-166, Cys-169, and Ser-375 each coordinate [4Fe-4S] cluster. One can recognise a Radical SAM core domain in the interval 145–364; sequence GGDGKTATAT…QEIAEEMGFL (220 aa).

The protein belongs to the radical SAM superfamily. Lipoyl synthase family. It depends on [4Fe-4S] cluster as a cofactor.

It localises to the mitochondrion. It carries out the reaction [[Fe-S] cluster scaffold protein carrying a second [4Fe-4S](2+) cluster] + N(6)-octanoyl-L-lysyl-[protein] + 2 oxidized [2Fe-2S]-[ferredoxin] + 2 S-adenosyl-L-methionine + 4 H(+) = [[Fe-S] cluster scaffold protein] + N(6)-[(R)-dihydrolipoyl]-L-lysyl-[protein] + 4 Fe(3+) + 2 hydrogen sulfide + 2 5'-deoxyadenosine + 2 L-methionine + 2 reduced [2Fe-2S]-[ferredoxin]. It functions in the pathway protein modification; protein lipoylation via endogenous pathway; protein N(6)-(lipoyl)lysine from octanoyl-[acyl-carrier-protein]: step 2/2. In terms of biological role, catalyzes the radical-mediated insertion of two sulfur atoms into the C-6 and C-8 positions of the octanoyl moiety bound to the lipoyl domains of lipoate-dependent enzymes, thereby converting the octanoylated domains into lipoylated derivatives. This Ostreococcus lucimarinus (strain CCE9901) protein is Lipoyl synthase, mitochondrial.